The following is a 378-amino-acid chain: Uroporphyrinogen decarboxylase (378 aa).

Substrate is bound by residues 40 to 44 (RQAGR), D90, Y167, S222, and H355.

It belongs to the uroporphyrinogen decarboxylase family. Homodimer.

The protein localises to the cytoplasm. The enzyme catalyses uroporphyrinogen III + 4 H(+) = coproporphyrinogen III + 4 CO2. Its pathway is porphyrin-containing compound metabolism; protoporphyrin-IX biosynthesis; coproporphyrinogen-III from 5-aminolevulinate: step 4/4. Functionally, catalyzes the decarboxylation of four acetate groups of uroporphyrinogen-III to yield coproporphyrinogen-III. This Psychrobacter cryohalolentis (strain ATCC BAA-1226 / DSM 17306 / VKM B-2378 / K5) protein is Uroporphyrinogen decarboxylase.